A 98-amino-acid polypeptide reads, in one-letter code: uncharacterized protein (98 aa).

A compositionally biased stretch (low complexity) spans 1-21; the sequence is MTTSPTTISTTTAATTTTTTP. The interval 1–26 is disordered; it reads MTTSPTTISTTTAATTTTTTPGKGTD. Residues 29–49 traverse the membrane as a helical segment; the sequence is MVYIEAMLFSMLVLILLIIVC.

It is found in the host membrane. This is an uncharacterized protein from Equine herpesvirus 2 (strain 86/87) (EHV-2).